We begin with the raw amino-acid sequence, 202 residues long: Small ribosomal subunit protein uS4 (202 aa).

Positions 22 to 43 (TRKSARRAYPPGQHGQNRKKRS) are disordered. In terms of domain architecture, S4 RNA-binding spans 90–152 (MRLDNTVFRL…AQSRKLVEAN (63 aa)).

It belongs to the universal ribosomal protein uS4 family. In terms of assembly, part of the 30S ribosomal subunit. Contacts protein S5. The interaction surface between S4 and S5 is involved in control of translational fidelity.

Functionally, one of the primary rRNA binding proteins, it binds directly to 16S rRNA where it nucleates assembly of the body of the 30S subunit. Its function is as follows. With S5 and S12 plays an important role in translational accuracy. The chain is Small ribosomal subunit protein uS4 from Nostoc punctiforme (strain ATCC 29133 / PCC 73102).